Here is a 551-residue protein sequence, read N- to C-terminus: Probable aldehyde dehydrogenase (551 aa).

Position 278–283 (Gly278–Ala283) interacts with NAD(+). The Proton acceptor role is filled by Glu297. The Nucleophile role is filled by Cys332.

The protein belongs to the aldehyde dehydrogenase family. In uninfected plants, highest levels found in stems. In plants infected with the flax rust, highest levels in leaves. Higher levels of expression in infected leaves than uninfected stems.

The enzyme catalyses an aldehyde + NAD(+) + H2O = a carboxylate + NADH + 2 H(+). Its function is as follows. Could be involved in facilitating the biotrophic relationship between the plant and the rust fungus. The chain is Probable aldehyde dehydrogenase (FIS1) from Linum usitatissimum (Flax).